Here is a 424-residue protein sequence, read N- to C-terminus: MLDIRLIREQPDMVKAALGRAGVDPAQVDAVLAYDEQRRALLREVEKLKALRNAVSKEIGKMSDAGERDTKIAEMRAVGDRIAALDRELAAVEERQYAALMELRNLPHPAVPDGPDETYNVVIAQEGEPRAFDFAPKPHWELGEALDIIDFERGVKLSGSRFYVLKGLGARLQRALIQWMLDLHIQQGYHEVYTPFVVKEQCMWGARQLPKFRDNLYRDVEDDLWLVPTAEVPVTNLHRDEILEADQLPLRYCAYTPCFRREKMSAGRDVRGIKRGHQFDKVEMYMFVHPDTSYDELEKLRADAEATCRLLGLTFRTKELCTGDLGFAATRTYDIEVWAPGQGEWLEVSSCSNVEAFQARAANIRYRSAPGARPEYVHTLNGSGLGLPRTLIAIMENYQQADGSIIIPDVLRPYMGGAEVIRRS.

229–231 (TAE) contacts L-serine. Residue 260–262 (RRE) participates in ATP binding. An L-serine-binding site is contributed by glutamate 283. Residue 347–350 (EVSS) coordinates ATP. L-serine is bound at residue serine 383.

This sequence belongs to the class-II aminoacyl-tRNA synthetase family. Type-1 seryl-tRNA synthetase subfamily. Homodimer. The tRNA molecule binds across the dimer.

It localises to the cytoplasm. The catalysed reaction is tRNA(Ser) + L-serine + ATP = L-seryl-tRNA(Ser) + AMP + diphosphate + H(+). It catalyses the reaction tRNA(Sec) + L-serine + ATP = L-seryl-tRNA(Sec) + AMP + diphosphate + H(+). It functions in the pathway aminoacyl-tRNA biosynthesis; selenocysteinyl-tRNA(Sec) biosynthesis; L-seryl-tRNA(Sec) from L-serine and tRNA(Sec): step 1/1. Catalyzes the attachment of serine to tRNA(Ser). Is also able to aminoacylate tRNA(Sec) with serine, to form the misacylated tRNA L-seryl-tRNA(Sec), which will be further converted into selenocysteinyl-tRNA(Sec). The polypeptide is Serine--tRNA ligase (Roseiflexus castenholzii (strain DSM 13941 / HLO8)).